A 295-amino-acid chain; its full sequence is Glycine--tRNA ligase alpha subunit (295 aa).

The protein belongs to the class-II aminoacyl-tRNA synthetase family. In terms of assembly, tetramer of two alpha and two beta subunits.

It localises to the cytoplasm. It carries out the reaction tRNA(Gly) + glycine + ATP = glycyl-tRNA(Gly) + AMP + diphosphate. The chain is Glycine--tRNA ligase alpha subunit from Shouchella clausii (strain KSM-K16) (Alkalihalobacillus clausii).